The primary structure comprises 173 residues: MSIDALKNELPEYAKDLKLNLSSLGRETELDDQKKWGTFLASAHAVGEPKTLAAIKAEAETRLSDEALTAAKAASAIMGMNNVYYRFVHLSKNKEYATLPAKLRMNILANPGVDKADFELWSLAVSAINGCGLCIDSHEAELRKHGLTTTQVQAAVRIAATVNAIAAVLAAES.

The Proton donor role is filled by C131. C131 and C134 are oxidised to a cystine. C134 acts as the Cysteine sulfenic acid (-SOH) intermediate in catalysis.

It belongs to the AhpD family.

The enzyme catalyses N(6)-[(R)-dihydrolipoyl]-L-lysyl-[lipoyl-carrier protein] + a hydroperoxide = N(6)-[(R)-lipoyl]-L-lysyl-[lipoyl-carrier protein] + an alcohol + H2O. Its function is as follows. Antioxidant protein with alkyl hydroperoxidase activity. Required for the reduction of the AhpC active site cysteine residues and for the regeneration of the AhpC enzyme activity. In Maricaulis maris (strain MCS10) (Caulobacter maris), this protein is Alkyl hydroperoxide reductase AhpD.